The primary structure comprises 161 residues: N5-carboxyaminoimidazole ribonucleotide mutase (161 aa).

3 residues coordinate substrate: S9, D12, and R39.

Belongs to the AIR carboxylase family. Class I subfamily.

It catalyses the reaction 5-carboxyamino-1-(5-phospho-D-ribosyl)imidazole + H(+) = 5-amino-1-(5-phospho-D-ribosyl)imidazole-4-carboxylate. It functions in the pathway purine metabolism; IMP biosynthesis via de novo pathway; 5-amino-1-(5-phospho-D-ribosyl)imidazole-4-carboxylate from 5-amino-1-(5-phospho-D-ribosyl)imidazole (N5-CAIR route): step 2/2. In terms of biological role, catalyzes the conversion of N5-carboxyaminoimidazole ribonucleotide (N5-CAIR) to 4-carboxy-5-aminoimidazole ribonucleotide (CAIR). This chain is N5-carboxyaminoimidazole ribonucleotide mutase, found in Vibrio vulnificus (strain CMCP6).